We begin with the raw amino-acid sequence, 348 residues long: MTDTTIRLTQTVKGAGCAAKLAPGDLDRALCGLDLPVDPNLLVGLERADDAGVYRISDDLALVQTIDFFPPMVDDPYSFGQIAAANALSDIYAMGGVPKTAMNVVAFPAKTMDISVLRSVIEGGLDKMREAGVVLVGGHTVEDSELKYGLSVTGFIHPDRILTKKNLQTGDCLILTKPLGTGIVSTAIKAGLAGSDLTERVIRNMTALNRDAALVMGDFTVHACTDITGFGFLGHLAEMVVDSGCGVRIIAADVPHYPEALEWADMGLIPGGAYNNRDFRGMFVDFGAAVSRRFRDLLFDPQTSGGLLIAVAPNEAEQLVAALKATGIECAAVVGEVVEEPLERIVVE.

C17 is a catalytic residue. ATP contacts are provided by residues K20 and 47 to 49 (RAD). Residue D50 coordinates Mg(2+). ATP contacts are provided by residues D67, D90, and 138–140 (GHT). D90 contacts Mg(2+). Position 226 (D226) interacts with Mg(2+).

Belongs to the selenophosphate synthase 1 family. Class I subfamily. As to quaternary structure, homodimer. The cofactor is Mg(2+).

The catalysed reaction is hydrogenselenide + ATP + H2O = selenophosphate + AMP + phosphate + 2 H(+). Its function is as follows. Synthesizes selenophosphate from selenide and ATP. The sequence is that of Selenide, water dikinase from Pelobacter propionicus (strain DSM 2379 / NBRC 103807 / OttBd1).